Here is a 180-residue protein sequence, read N- to C-terminus: Kappa-casein (180 aa).

A signal peptide spans 1-21 (MMKHFLLVVNILAVTLPFLAA). O-linked (GalNAc...) threonine glycans are attached at residues Thr132, Thr142, Thr147, and Thr153. Ser160 is subject to Phosphoserine; alternate. O-linked (GalNAc...) serine; alternate glycosylation occurs at Ser160.

Belongs to the kappa-casein family. In terms of tissue distribution, mammary gland specific. Secreted in milk.

It localises to the secreted. Its function is as follows. Kappa-casein stabilizes micelle formation, preventing casein precipitation in milk. The polypeptide is Kappa-casein (CSN3) (Oryctolagus cuniculus (Rabbit)).